A 780-amino-acid polypeptide reads, in one-letter code: Pendrin (780 aa).

The Cytoplasmic segment spans residues 1–87 (MAAPGGRSEP…YRVKEWLLSD (87 aa)). The helical transmembrane segment at 88–108 (VISGVSTGLVATLQGMAYALL) threads the bilayer. Position 109 (A109) is a topological domain, extracellular. The helical transmembrane segment at 110–130 (AVPVGYGLYSAFFPILTYFIF) threads the bilayer. Topologically, residues 131 to 135 (GTSRH) are cytoplasmic. A helical transmembrane segment spans residues 136–156 (ISVGPFPVVSLMVGSVVLSMA). Topologically, residues 157 to 191 (PDEHFLVSSSNGTVLNTTMIDTAARDTARVLIASA) are extracellular. The chain crosses the membrane as a helical span at residues 192–212 (LTLLVGIIQLIFGGLQIGFIV). The Cytoplasmic segment spans residues 213–218 (RYLADP). The chain crosses the membrane as a helical span at residues 219-239 (LVGGFTTAAAFQVLVSQLKIV). The Extracellular segment spans residues 240 to 263 (LNVSTKNYNGVLSIIYTLVEIFQN). The helical transmembrane segment at 264-284 (IGDTNLADFTAGLLTIVVCMA) threads the bilayer. Over 285 to 295 (VKELNDRFRHK) the chain is Cytoplasmic. The chain crosses the membrane as a helical span at residues 296–316 (IPVPIPIEVIVTIIATAISYG). Topologically, residues 317–344 (ANLEKNYNAGIVKSIPRGFLPPELPPVS) are extracellular. Residues 345–365 (LFSEMLAASFSIAVVAYAIAV) form a helical membrane-spanning segment. Topologically, residues 366–384 (SVGKVYATKYDYTIDGNQE) are cytoplasmic. The helical transmembrane segment at 385–405 (FIAFGISNIFSGFFSCFVATT) threads the bilayer. At 406–421 (ALSRTAVQESTGGKTQ) the chain is on the extracellular side. A helical membrane pass occupies residues 422–442 (VAGIISAAIVMIAILALGKLL). Over 443-448 (EPLQKS) the chain is Cytoplasmic. The helical transmembrane segment at 449–469 (VLAAVVIANLKGMFMQLCDIP) threads the bilayer. The Extracellular portion of the chain corresponds to 470 to 486 (RLWRQNKIDAVIWVFTC). The chain crosses the membrane as a helical span at residues 487–507 (IVSIILGLDLGLLAGLIFGLL). The Cytoplasmic segment spans residues 508–780 (TVVLRVQFPS…QDEAMRTLAS (273 aa)). Residues 535-729 (NYKNIEEPQG…LTVHDAILYL (195 aa)) form the STAS domain.

The protein belongs to the SLC26A/SulP transporter (TC 2.A.53) family. As to quaternary structure, interacts with IQGAP1; this interaction enhances the chloride-bicarbonate exchange activity of SLC26A4. Highly expressed in the kidney (at protein level). High expression in adult thyroid, lower expression in adult and fetal kidney and fetal brain. Not expressed in other tissues.

The protein resides in the cell membrane. It localises to the apical cell membrane. The catalysed reaction is chloride(in) = chloride(out). The enzyme catalyses iodide(out) = iodide(in). It carries out the reaction hydrogencarbonate(in) + chloride(out) = hydrogencarbonate(out) + chloride(in). It catalyses the reaction iodide(in) + hydrogencarbonate(out) = iodide(out) + hydrogencarbonate(in). The catalysed reaction is iodide(in) + chloride(out) = iodide(out) + chloride(in). The enzyme catalyses formate(in) + chloride(out) = formate(out) + chloride(in). Functionally, sodium-independent transporter of chloride and iodide. Mediates electroneutral chloride-bicarbonate, chloride-iodide and chloride-formate exchange with 1:1 stoichiometry. Mediates electroneutral iodide-bicarbonate exchange. The chain is Pendrin (SLC26A4) from Homo sapiens (Human).